Reading from the N-terminus, the 1377-residue chain is DNA-directed RNA polymerase subunit beta (1377 aa).

This sequence belongs to the RNA polymerase beta chain family. As to quaternary structure, the RNAP catalytic core consists of 2 alpha, 1 beta, 1 beta' and 1 omega subunit. When a sigma factor is associated with the core the holoenzyme is formed, which can initiate transcription.

It carries out the reaction RNA(n) + a ribonucleoside 5'-triphosphate = RNA(n+1) + diphosphate. Its function is as follows. DNA-dependent RNA polymerase catalyzes the transcription of DNA into RNA using the four ribonucleoside triphosphates as substrates. This is DNA-directed RNA polymerase subunit beta from Brucella canis (strain ATCC 23365 / NCTC 10854 / RM-666).